The following is a 293-amino-acid chain: Formamidopyrimidine-DNA glycosylase (293 aa).

The active-site Schiff-base intermediate with DNA is the proline 2. The active-site Proton donor is the glutamate 3. Residue lysine 58 is the Proton donor; for beta-elimination activity of the active site. Positions 104, 123, and 166 each coordinate DNA. The segment at 257-293 (QVYDREGDKCRTPACKGAVKRFTQNGRSTFWCPVCQT) adopts an FPG-type zinc-finger fold. The Proton donor; for delta-elimination activity role is filled by arginine 283.

The protein belongs to the FPG family. As to quaternary structure, monomer. Zn(2+) serves as cofactor.

The enzyme catalyses Hydrolysis of DNA containing ring-opened 7-methylguanine residues, releasing 2,6-diamino-4-hydroxy-5-(N-methyl)formamidopyrimidine.. It carries out the reaction 2'-deoxyribonucleotide-(2'-deoxyribose 5'-phosphate)-2'-deoxyribonucleotide-DNA = a 3'-end 2'-deoxyribonucleotide-(2,3-dehydro-2,3-deoxyribose 5'-phosphate)-DNA + a 5'-end 5'-phospho-2'-deoxyribonucleoside-DNA + H(+). Functionally, involved in base excision repair of DNA damaged by oxidation or by mutagenic agents. Acts as a DNA glycosylase that recognizes and removes damaged bases. Has a preference for oxidized purines, such as 7,8-dihydro-8-oxoguanine (8-oxoG). Has AP (apurinic/apyrimidinic) lyase activity and introduces nicks in the DNA strand. Cleaves the DNA backbone by beta-delta elimination to generate a single-strand break at the site of the removed base with both 3'- and 5'-phosphates. This is Formamidopyrimidine-DNA glycosylase from Nitrobacter winogradskyi (strain ATCC 25391 / DSM 10237 / CIP 104748 / NCIMB 11846 / Nb-255).